A 547-amino-acid polypeptide reads, in one-letter code: Beta,beta-carotene 15,15'-dioxygenase (547 aa).

Fe cation contacts are provided by His172, His237, His308, and His514. Residues 528-540 show a composition bias toward basic and acidic residues; it reads QAASEEQRDRASD. Residues 528–547 are disordered; the sequence is QAASEEQRDRASDCHGAPLT.

This sequence belongs to the carotenoid oxygenase family. Requires Fe(2+) as cofactor. Highly expressed in retinal pigment epithelium. Also expressed in kidney, testis, liver, brain, small intestine and colon.

It localises to the cytoplasm. Its subcellular location is the cytosol. It catalyses the reaction all-trans-beta-carotene + O2 = 2 all-trans-retinal. The protein operates within cofactor metabolism; retinol metabolism. In terms of biological role, symmetrically cleaves beta-carotene into two molecules of retinal using a dioxygenase mechanism. This Homo sapiens (Human) protein is Beta,beta-carotene 15,15'-dioxygenase.